Reading from the N-terminus, the 182-residue chain is Biotin carboxyl carrier protein of acetyl-CoA carboxylase (182 aa).

The interval 70–95 (AAPSPSPEPGTSRAADHAVTSSGSQP) is disordered. Residues 104 to 180 (LAEVASPMVG…EYNQPLMRIK (77 aa)) form the Biotinyl-binding domain. Lys-146 carries the N6-biotinyllysine modification.

In terms of assembly, homodimer.

The protein operates within lipid metabolism; fatty acid biosynthesis. Functionally, this protein is a component of the acetyl coenzyme A carboxylase complex; first, biotin carboxylase catalyzes the carboxylation of the carrier protein and then the transcarboxylase transfers the carboxyl group to form malonyl-CoA. This chain is Biotin carboxyl carrier protein of acetyl-CoA carboxylase (accB), found in Nostoc sp. (strain PCC 7120 / SAG 25.82 / UTEX 2576).